Reading from the N-terminus, the 151-residue chain is Major curlin subunit (151 aa).

The N-terminal stretch at 1–20 (MKLLKVAAIAAIVFSGSALA) is a signal peptide. Residues 71 to 90 (TQHGGGNGADVGQGSDDSSI) form a disordered region.

It belongs to the CsgA/CsgB family.

The protein resides in the fimbrium. In terms of biological role, curlin is the structural subunit of the curli fimbriae. Curli are coiled surface structures that assemble preferentially at growth temperatures below 37 degrees Celsius. Curli can bind to fibronectin. The chain is Major curlin subunit (csgA) from Escherichia coli (strain K12).